A 603-amino-acid polypeptide reads, in one-letter code: MTTAPIDNIRNFSIVAHIDHGKSTLADRLIQITGGMSDREMAGKEQVLDSMDIERERGITIKAQTVRLKYRAHDGKDYIFNLMDTPGHVDFAYEVSRSLAACEGSLLVVDASQGVEAQTLANVYHALDAGHEIVPVLNKVDLPAAEPEKIKQQIEDVIGLDASDAVMISAKTGLGVPDVLEAIVTRLPPPKGDRDATLKALLVDSWYDVYLGVVVLVRVVDGVLKKGQRIRMMGTGAAYDVERVGYFTPKMVNVEELGPGEVGFITAAIKEVADTRVGDTITDDKKPVTDMLPGFKPAIPVVFCGLFPVDADDFETLRAAMGKLRLNDASFSFEMETSAALGFGFRCGFLGLLHLEIIQERLSREFDLDLIATAPSVIYKMKLTDGTEMEIHNPVDMPDVVKIAEIEEPWIEATILTPDEYLGSVLKLCQDRRGNQKELTYVGARAMVKYDLPLNEVVFDFYDRLKSVSKGYASFDYHLTDYKPADLVKMQILVNAEPVDALSMLVHRTRAEGRGRAMVEKMKELIPPHMFQIPIQAAIGGKVIARETVRALRKDVTAKCYGGDITRKRKLLEKQKEGKKKMRQFGKVDIPQEAFIAALKVDS.

One can recognise a tr-type G domain in the interval 7-191 (DNIRNFSIVA…AIVTRLPPPK (185 aa)). Residues 19 to 24 (DHGKST) and 138 to 141 (NKVD) each bind GTP.

This sequence belongs to the TRAFAC class translation factor GTPase superfamily. Classic translation factor GTPase family. LepA subfamily.

Its subcellular location is the cell inner membrane. It catalyses the reaction GTP + H2O = GDP + phosphate + H(+). Required for accurate and efficient protein synthesis under certain stress conditions. May act as a fidelity factor of the translation reaction, by catalyzing a one-codon backward translocation of tRNAs on improperly translocated ribosomes. Back-translocation proceeds from a post-translocation (POST) complex to a pre-translocation (PRE) complex, thus giving elongation factor G a second chance to translocate the tRNAs correctly. Binds to ribosomes in a GTP-dependent manner. The protein is Elongation factor 4 of Rhodopseudomonas palustris (strain ATCC BAA-98 / CGA009).